The following is a 244-amino-acid chain: Leucyl/phenylalanyl-tRNA--protein transferase (244 aa).

This sequence belongs to the L/F-transferase family.

It is found in the cytoplasm. It catalyses the reaction N-terminal L-lysyl-[protein] + L-leucyl-tRNA(Leu) = N-terminal L-leucyl-L-lysyl-[protein] + tRNA(Leu) + H(+). The catalysed reaction is N-terminal L-arginyl-[protein] + L-leucyl-tRNA(Leu) = N-terminal L-leucyl-L-arginyl-[protein] + tRNA(Leu) + H(+). The enzyme catalyses L-phenylalanyl-tRNA(Phe) + an N-terminal L-alpha-aminoacyl-[protein] = an N-terminal L-phenylalanyl-L-alpha-aminoacyl-[protein] + tRNA(Phe). In terms of biological role, functions in the N-end rule pathway of protein degradation where it conjugates Leu, Phe and, less efficiently, Met from aminoacyl-tRNAs to the N-termini of proteins containing an N-terminal arginine or lysine. The protein is Leucyl/phenylalanyl-tRNA--protein transferase of Janthinobacterium sp. (strain Marseille) (Minibacterium massiliensis).